Consider the following 485-residue polypeptide: Glutamate--tRNA ligase (485 aa).

Positions 11-21 (PSPTGHLHIGN) match the 'HIGH' region motif. A 'KMSKS' region motif is present at residues 252–256 (KLSKR). Position 255 (K255) interacts with ATP.

Belongs to the class-I aminoacyl-tRNA synthetase family. Glutamate--tRNA ligase type 1 subfamily. In terms of assembly, monomer.

The protein localises to the cytoplasm. It carries out the reaction tRNA(Glu) + L-glutamate + ATP = L-glutamyl-tRNA(Glu) + AMP + diphosphate. In terms of biological role, catalyzes the attachment of glutamate to tRNA(Glu) in a two-step reaction: glutamate is first activated by ATP to form Glu-AMP and then transferred to the acceptor end of tRNA(Glu). This is Glutamate--tRNA ligase from Bacillus cereus (strain ATCC 10987 / NRS 248).